The chain runs to 891 residues: UPF0182 protein Glov_0814 (891 aa).

A run of 7 helical transmembrane segments spans residues Leu-6 to Tyr-26, Gly-51 to Ala-71, Ile-102 to Trp-122, Phe-164 to Ala-184, Ile-202 to Leu-222, Thr-244 to Trp-264, and Gly-266 to Met-286.

It belongs to the UPF0182 family.

The protein localises to the cell membrane. The polypeptide is UPF0182 protein Glov_0814 (Trichlorobacter lovleyi (strain ATCC BAA-1151 / DSM 17278 / SZ) (Geobacter lovleyi)).